A 61-amino-acid polypeptide reads, in one-letter code: Large ribosomal subunit protein bL32 (61 aa).

Over residues 1–10 (MAQPKKKTSN) the composition is skewed to basic residues. The disordered stretch occupies residues 1-23 (MAQPKKKTSNAKRDQRRATWKRK).

Belongs to the bacterial ribosomal protein bL32 family.

This Gloeobacter violaceus (strain ATCC 29082 / PCC 7421) protein is Large ribosomal subunit protein bL32.